We begin with the raw amino-acid sequence, 162 residues long: Large ribosomal subunit protein uL10 (162 aa).

This sequence belongs to the universal ribosomal protein uL10 family. Part of the ribosomal stalk of the 50S ribosomal subunit. The N-terminus interacts with L11 and the large rRNA to form the base of the stalk. The C-terminus forms an elongated spine to which L12 dimers bind in a sequential fashion forming a multimeric L10(L12)X complex.

Its function is as follows. Forms part of the ribosomal stalk, playing a central role in the interaction of the ribosome with GTP-bound translation factors. The chain is Large ribosomal subunit protein uL10 from Acholeplasma laidlawii (strain PG-8A).